Reading from the N-terminus, the 317-residue chain is Aspartate carbamoyltransferase catalytic subunit (317 aa).

Carbamoyl phosphate is bound by residues R66 and T67. K94 is a binding site for L-aspartate. 3 residues coordinate carbamoyl phosphate: R116, H144, and Q147. Residues R177 and R231 each coordinate L-aspartate. Positions 272 and 273 each coordinate carbamoyl phosphate.

Belongs to the aspartate/ornithine carbamoyltransferase superfamily. ATCase family. In terms of assembly, heterododecamer (2C3:3R2) of six catalytic PyrB chains organized as two trimers (C3), and six regulatory PyrI chains organized as three dimers (R2).

The enzyme catalyses carbamoyl phosphate + L-aspartate = N-carbamoyl-L-aspartate + phosphate + H(+). The protein operates within pyrimidine metabolism; UMP biosynthesis via de novo pathway; (S)-dihydroorotate from bicarbonate: step 2/3. Functionally, catalyzes the condensation of carbamoyl phosphate and aspartate to form carbamoyl aspartate and inorganic phosphate, the committed step in the de novo pyrimidine nucleotide biosynthesis pathway. This chain is Aspartate carbamoyltransferase catalytic subunit, found in Rhodopseudomonas palustris (strain BisB5).